A 277-amino-acid chain; its full sequence is Lectin 1 (277 aa).

The N-terminal stretch at 1 to 30 is a signal peptide; the sequence is MSFSSSNFYVILSISLTVFILLFNINKVNS. Residue asparagine 143 is glycosylated (N-linked (GlcNAc...) asparagine). Mn(2+)-binding residues include glutamate 152 and aspartate 154. The Ca(2+) site is built by aspartate 154, asparagine 158, and aspartate 161. Mn(2+)-binding residues include aspartate 161 and histidine 167. A glycan (N-linked (GlcNAc...) asparagine) is linked at asparagine 269.

The protein belongs to the leguminous lectin family.

Its function is as follows. Lectin that may be involved in a cell recognition process. The sequence is that of Lectin 1 (LEC1) from Medicago truncatula (Barrel medic).